The primary structure comprises 470 residues: 3-isopropylmalate dehydratase large subunit (470 aa).

Residues asparagine 50–histidine 121 are disordered. [4Fe-4S] cluster-binding residues include cysteine 349, cysteine 409, and cysteine 412.

The protein belongs to the aconitase/IPM isomerase family. LeuC type 1 subfamily. In terms of assembly, heterodimer of LeuC and LeuD. The cofactor is [4Fe-4S] cluster.

It catalyses the reaction (2R,3S)-3-isopropylmalate = (2S)-2-isopropylmalate. The protein operates within amino-acid biosynthesis; L-leucine biosynthesis; L-leucine from 3-methyl-2-oxobutanoate: step 2/4. Its function is as follows. Catalyzes the isomerization between 2-isopropylmalate and 3-isopropylmalate, via the formation of 2-isopropylmaleate. The sequence is that of 3-isopropylmalate dehydratase large subunit from Azotobacter vinelandii.